A 153-amino-acid chain; its full sequence is MADQQNIRAFQKQLGINLNRKNVSRKKGLRMHHSIGLGFKTPKEAITGTYIDKKCPFTGHISIRGRILTGVVRKMKMHRTIVIRRDYLHFIRKYDRFEKRHRNMSVHLSPCFRDVEAGDIVTVGECRPLSKTVRFNVLKVSKMAGSKKKFSKF.

It belongs to the universal ribosomal protein uS17 family.

The sequence is that of Small ribosomal subunit protein uS17 (RpS11) from Anopheles gambiae (African malaria mosquito).